A 401-amino-acid polypeptide reads, in one-letter code: Glutamyl-tRNA reductase (401 aa).

Residues 45 to 48 (TCNR), Ser101, 106 to 108 (EDQ), and Gln112 contribute to the substrate site. Cys46 serves as the catalytic Nucleophile. 177 to 182 (GYGDVG) contributes to the NADP(+) binding site.

The protein belongs to the glutamyl-tRNA reductase family. As to quaternary structure, homodimer.

The catalysed reaction is (S)-4-amino-5-oxopentanoate + tRNA(Glu) + NADP(+) = L-glutamyl-tRNA(Glu) + NADPH + H(+). It functions in the pathway porphyrin-containing compound metabolism; protoporphyrin-IX biosynthesis; 5-aminolevulinate from L-glutamyl-tRNA(Glu): step 1/2. In terms of biological role, catalyzes the NADPH-dependent reduction of glutamyl-tRNA(Glu) to glutamate 1-semialdehyde (GSA). The protein is Glutamyl-tRNA reductase of Clostridium botulinum (strain Alaska E43 / Type E3).